Here is a 323-residue protein sequence, read N- to C-terminus: NADH-cytochrome b5 reductase 2 (323 aa).

Residues 32–48 (LAPIYLGVGLIGLGVGL) form a helical membrane-spanning segment. The region spanning 72–177 (QGWVDLKLAQ…KGPIPKYPWE (106 aa)) is the FAD-binding FR-type domain. 180–215 (KHKHICLIAGGTGITPMYQLARKIFKDPEDQTKVTL) is a binding site for FAD.

This sequence belongs to the flavoprotein pyridine nucleotide cytochrome reductase family. It depends on FAD as a cofactor.

The protein localises to the mitochondrion outer membrane. It carries out the reaction 2 Fe(III)-[cytochrome b5] + NADH = 2 Fe(II)-[cytochrome b5] + NAD(+) + H(+). Its function is as follows. May mediate the reduction of outer membrane cytochrome b5. The protein is NADH-cytochrome b5 reductase 2 (mcr1) of Aspergillus fumigatus (strain ATCC MYA-4609 / CBS 101355 / FGSC A1100 / Af293) (Neosartorya fumigata).